A 141-amino-acid polypeptide reads, in one-letter code: ATP synthase epsilon chain (141 aa).

It belongs to the ATPase epsilon chain family. In terms of assembly, F-type ATPases have 2 components, CF(1) - the catalytic core - and CF(0) - the membrane proton channel. CF(1) has five subunits: alpha(3), beta(3), gamma(1), delta(1), epsilon(1). CF(0) has three main subunits: a, b and c.

Its subcellular location is the cell inner membrane. Produces ATP from ADP in the presence of a proton gradient across the membrane. The chain is ATP synthase epsilon chain from Pseudomonas fluorescens (strain ATCC BAA-477 / NRRL B-23932 / Pf-5).